Consider the following 125-residue polypeptide: Histone H2A.v3 (125 aa).

This sequence belongs to the histone H2A family. As to quaternary structure, the nucleosome is a histone octamer containing two molecules each of H2A, H2B, H3 and H4 assembled in one H3-H4 heterotetramer and two H2A-H2B heterodimers. The octamer wraps approximately 147 bp of DNA.

The protein resides in the nucleus. It localises to the chromosome. Core component of nucleosome which plays a central role in DNA double strand break (DSB) repair. Nucleosomes wrap and compact DNA into chromatin, limiting DNA accessibility to the cellular machineries which require DNA as a template. Histones thereby play a central role in transcription regulation, DNA repair, DNA replication and chromosomal stability. DNA accessibility is regulated via a complex set of post-translational modifications of histones, also called histone code, and nucleosome remodeling. In Dictyostelium discoideum (Social amoeba), this protein is Histone H2A.v3 (H2Av3).